The primary structure comprises 205 residues: Inactive ribonuclease-like protein 9 (205 aa).

Positions 1–26 are cleaved as a signal peptide; sequence MMRTLITIHPLPLLLLLQQLLQPVQF. Cystine bridges form between Cys98–Cys153, Cys116–Cys168, and Cys123–Cys130. Residues Asn131 and Asn143 are each glycosylated (N-linked (GlcNAc...) asparagine).

It belongs to the pancreatic ribonuclease family.

It localises to the secreted. Does not exhibit any ribonuclease activity. This is Inactive ribonuclease-like protein 9 (RNASE9) from Gorilla gorilla gorilla (Western lowland gorilla).